Reading from the N-terminus, the 1336-residue chain is pre-mRNA 3' end processing protein WDR33 (1336 aa).

Alanine 2 carries the N-acetylalanine modification. Serine 7 carries the phosphoserine modification. Lysine 46 is modified (N6-acetyllysine). WD repeat units lie at residues lysine 117 to isoleucine 156, alanine 159 to phenylalanine 198, alanine 200 to isoleucine 239, glycine 242 to threonine 283, alanine 286 to glutamine 325, glycine 329 to glycine 369, and alanine 373 to arginine 412. Glycyl lysine isopeptide (Lys-Gly) (interchain with G-Cter in SUMO2) cross-links involve residues lysine 526, lysine 530, and lysine 560. Residues glutamine 568–arginine 1336 form a disordered region. Positions glutamine 573–glycine 590 are enriched in pro residues. Polar residues predominate over residues methionine 594–serine 607. Over residues glutamine 608–histidine 643 the composition is skewed to low complexity. One can recognise a Collagen-like domain in the interval glycine 618–proline 770. Residues proline 683–proline 695 show a composition bias toward pro residues. Composition is skewed to low complexity over residues glutamine 696 to proline 707 and glutamine 726 to glycine 751. Omega-N-methylarginine is present on arginine 782. Positions glycine 854–leucine 869 are enriched in low complexity. Arginine 915 is subject to Asymmetric dimethylarginine. Residues proline 932–glycine 941 are compositionally biased toward low complexity. Basic and acidic residues-rich tracts occupy residues serine 971–proline 989 and glycine 998–glycine 1034. Arginine 987 is modified (omega-N-methylarginine). Arginine 1035 bears the Omega-N-methylarginine mark. 2 stretches are compositionally biased toward basic and acidic residues: residues proline 1056–glycine 1068 and glutamate 1078–aspartate 1122. Residues phenylalanine 1130–glutamate 1140 show a composition bias toward acidic residues. A compositionally biased stretch (basic and acidic residues) spans glutamate 1141–glycine 1150. Residues arginine 1151–arginine 1160 show a composition bias toward basic residues. Basic and acidic residues-rich tracts occupy residues glutamate 1169 to serine 1217 and serine 1242 to glycine 1259. At serine 1210 the chain carries Phosphoserine. Arginine 1262 carries the omega-N-methylarginine modification. A compositionally biased stretch (basic and acidic residues) spans aspartate 1281 to proline 1293. Over residues glycine 1301–arginine 1326 the composition is skewed to low complexity. Arginine 1315 carries the asymmetric dimethylarginine; alternate modification. An Omega-N-methylarginine; alternate modification is found at arginine 1315.

Belongs to the WD repeat WDR33 family. In terms of assembly, component of the cleavage and polyadenylation specificity factor (CPSF) module of the pre-mRNA 3'-end processing complex. Interacts with CPSF3/CPSF73. Most highly expressed in testis.

It localises to the nucleus. Essential for both cleavage and polyadenylation of pre-mRNA 3' ends. The chain is pre-mRNA 3' end processing protein WDR33 (WDR33) from Homo sapiens (Human).